A 257-amino-acid polypeptide reads, in one-letter code: tRNA (guanine-N(1)-)-methyltransferase (257 aa).

S-adenosyl-L-methionine-binding positions include glycine 117 and 137–142 (LGDFVL).

The protein belongs to the RNA methyltransferase TrmD family. As to quaternary structure, homodimer.

The protein resides in the cytoplasm. It catalyses the reaction guanosine(37) in tRNA + S-adenosyl-L-methionine = N(1)-methylguanosine(37) in tRNA + S-adenosyl-L-homocysteine + H(+). Its function is as follows. Specifically methylates guanosine-37 in various tRNAs. This is tRNA (guanine-N(1)-)-methyltransferase from Bordetella pertussis (strain Tohama I / ATCC BAA-589 / NCTC 13251).